Reading from the N-terminus, the 590-residue chain is Putative histone-lysine N-methyltransferase PRDM6 (590 aa).

The disordered stretch occupies residues 25–87; sequence QLFPHGGGGP…STPASSSTSA (63 aa). Positions 29 to 42 are enriched in gly residues; it reads HGGGGPLKGGGAAG. Residues 71–87 are compositionally biased toward low complexity; the sequence is ASLSSASSTPASSSTSA. In terms of domain architecture, SET spans 241-360; sequence REVCLCTSTV…RGTELLVWYN (120 aa). The C2H2-type 1; degenerate zinc-finger motif lies at 468–490; that stretch reads WKCGQCFKTFTQRILLQMHVCTQ. C2H2-type zinc fingers lie at residues 496 to 518 and 524 to 546; these read YQCGHCSQSFSQPSELRNHVVTH and FKCGYCGRAFAGATTLNNHIRTH. Residues 552–574 form a C2H2-type 4; degenerate zinc finger; the sequence is FKCERCERSFTQATQLSRHQRMP.

This sequence belongs to the class V-like SAM-binding methyltransferase superfamily. Interacts with HDAC1, HDAC2, HDAC3, CBX1 and EP300.

It is found in the nucleus. The catalysed reaction is L-lysyl(20)-[histone H4] + S-adenosyl-L-methionine = N(6)-methyl-L-lysyl(20)-[histone H4] + S-adenosyl-L-homocysteine + H(+). Functionally, putative histone methyltransferase that acts as a transcriptional repressor of smooth muscle gene expression. Promotes the transition from differentiated to proliferative smooth muscle by suppressing differentiation and maintaining the proliferative potential of vascular smooth muscle cells. Also plays a role in endothelial cells by inhibiting endothelial cell proliferation, survival and differentiation. It is unclear whether it has histone methyltransferase activity in vivo. According to some authors, it does not act as a histone methyltransferase by itself and represses transcription by recruiting EHMT2/G9a. According to others, it possesses histone methyltransferase activity when associated with other proteins and specifically methylates 'Lys-20' of histone H4 in vitro. 'Lys-20' methylation represents a specific tag for epigenetic transcriptional repression. The sequence is that of Putative histone-lysine N-methyltransferase PRDM6 (PRDM6) from Bos taurus (Bovine).